Reading from the N-terminus, the 410-residue chain is Arginine deiminase (410 aa).

Catalysis depends on C400, which acts as the Amidino-cysteine intermediate.

Belongs to the arginine deiminase family.

It localises to the cytoplasm. The catalysed reaction is L-arginine + H2O = L-citrulline + NH4(+). It functions in the pathway amino-acid degradation; L-arginine degradation via ADI pathway; carbamoyl phosphate from L-arginine: step 1/2. The polypeptide is Arginine deiminase (Streptococcus agalactiae serotype Ia (strain ATCC 27591 / A909 / CDC SS700)).